A 219-amino-acid polypeptide reads, in one-letter code: Envelope protein US9 homolog (219 aa).

Residues 1–193 lie on the Intravirion side of the membrane; that stretch reads MEKAEAAAVV…RHRRRRVALT (193 aa). Positions 145–146 match the Di-leucine internalization motif motif; it reads LL. Residues 153-168 form an acidic region; sequence DYDSESGCYYSESDNE. Phosphoserine; by host CK2 occurs at positions 163 and 165. Residues 194–214 traverse the membrane as a helical; Signal-anchor for type II membrane protein segment; it reads VAGVILVVVLCAISGIVGAFL. Residues 215–219 lie on the Virion surface side of the membrane; that stretch reads ARVFP.

The protein belongs to the alphaherpesvirinae envelope protein US9 family. In terms of processing, phosphorylated on serines within the acidic cluster. Phosphorylation determines whether endocytosed viral US9 traffics to the trans-Golgi network or recycles to the cell membrane.

Its subcellular location is the virion membrane. The protein localises to the host Golgi apparatus membrane. It localises to the host smooth endoplasmic reticulum membrane. It is found in the host cell membrane. In terms of biological role, essential for the anterograde spread of the infection throughout the host nervous system. Together with the gE/gI heterodimer, US9 is involved in the sorting and transport of viral structural components toward axon tips. The polypeptide is Envelope protein US9 homolog (Equine herpesvirus 1 (strain Kentucky A) (EHV-1)).